We begin with the raw amino-acid sequence, 507 residues long: O-fucosyltransferase 30 (507 aa).

The chain crosses the membrane as a helical; Signal-anchor for type II membrane protein span at residues 26–46; the sequence is AIFLCSVSILVVFFIVVFFIT. N-linked (GlcNAc...) asparagine glycosylation is found at N110, N146, N398, and N410.

The protein belongs to the glycosyltransferase GT106 family.

The protein localises to the membrane. It participates in glycan metabolism. This is O-fucosyltransferase 30 from Arabidopsis thaliana (Mouse-ear cress).